The chain runs to 401 residues: Probable 2,3-bisphosphoglycerate-independent phosphoglycerate mutase (401 aa).

The protein belongs to the BPG-independent phosphoglycerate mutase family. A-PGAM subfamily.

It carries out the reaction (2R)-2-phosphoglycerate = (2R)-3-phosphoglycerate. Its pathway is carbohydrate degradation; glycolysis; pyruvate from D-glyceraldehyde 3-phosphate: step 3/5. Catalyzes the interconversion of 2-phosphoglycerate and 3-phosphoglycerate. The polypeptide is Probable 2,3-bisphosphoglycerate-independent phosphoglycerate mutase (Thermotoga petrophila (strain ATCC BAA-488 / DSM 13995 / JCM 10881 / RKU-1)).